Here is a 3011-residue protein sequence, read N- to C-terminus: Genome polyprotein (3011 aa).

Residue S2 is modified to N-acetylserine; by host. An interaction with STAT1 region spans residues 2-23 (STNPKPQRKTKRNTNRRPQNVK). Positions 2 to 58 (STNPKPQRKTKRNTNRRPQNVKFPGGGQIVGGVCLLPRRGPRVGVRATRKTSERSQP) are interaction with EIF2AK2/PKR. Residues 2–59 (STNPKPQRKTKRNTNRRPQNVKFPGGGQIVGGVCLLPRRGPRVGVRATRKTSERSQPR) are interaction with DDX3X. The interval 2–75 (STNPKPQRKT…PKARRPEGRS (74 aa)) is disordered. The Cytoplasmic portion of the chain corresponds to 2 to 168 (STNPKPQRKT…EDGVNYATGN (167 aa)). 2 consecutive short sequence motifs (nuclear localization signal) follow at residues 5–13 (PKPQRKTKR) and 38–43 (PRRGPR). Over residues 7–16 (PQRKTKRNTN) the composition is skewed to basic residues. S53 is modified (phosphoserine; by host). 2 short sequence motifs (nuclear localization signal) span residues 58–64 (PRGRRQP) and 66–71 (PKARRP). The segment covering 58-68 (PRGRRQPIPKA) has biased composition (basic residues). S99 is modified (phosphoserine; by host). The segment at 112–152 (PRRRSRNLGKVIDTLTCGFADLMGYIPLVGAPLGGAARALA) is important for endoplasmic reticulum and mitochondrial localization. A Phosphoserine; by host PKA modification is found at S116. Residues 122–173 (VIDTLTCGFADLMGYIPLVGAPLGGAARALAHGVRVLEDGVNYATGNLPGCS) are interaction with APOA2. The interval 164 to 167 (YATG) is important for lipid droplets localization. A helical membrane pass occupies residues 169-189 (LPGCSFSIFLLALLSCLTVPA). The propeptide at 178 to 191 (LLALLSCLTVPASA) is ER anchor for the core protein, removed in mature form by host signal peptidase. The Lumenal portion of the chain corresponds to 190–358 (SAVEVRNSSG…AGAHWGVLAG (169 aa)). N196, N209, and N234 each carry an N-linked (GlcNAc...) asparagine; by host glycan. An important for fusion region spans residues 265 to 296 (IVGAAAFCSAMYVGDLCGSIFLVGQLFTLSPR). N305 carries N-linked (GlcNAc...) asparagine; by host glycosylation. A helical transmembrane segment spans residues 359–379 (PAYYSMVGNWAKVLVVLLLFA). Over 380-725 (GVDATTQVTG…WEYVVLLFLL (346 aa)) the chain is Lumenal. Residues 385 to 411 (TQVTGGTAGRNAYRLASLFSTGPSQNI) form an HVR1 region. N417, N423, N430, and N448 each carry an N-linked (GlcNAc...) (high mannose) asparagine; by host glycan. 3 disulfide bridges follow: C429–C552, C486–C494, and C503–C508. The interval 474-479 (YGGKAS) is HVR2. Positions 480 to 493 (NDQRPYCWHYAPRP) are CD81-binding 1. N-linked (GlcNAc...) (high mannose) asparagine; by host glycosylation is present at N532. The N-linked (GlcNAc...) asparagine; by host glycan is linked to N540. The CD81-binding 2 stretch occupies residues 544-551 (PPIGNWFG). An N-linked (GlcNAc...) (high mannose) asparagine; by host glycan is attached at N556. 4 disulfides stabilise this stretch: C564-C569, C581-C585, C597-C620, and C607-C644. N-linked (GlcNAc...) (high mannose) asparagine; by host glycosylation is found at N623 and N645. C652 and C677 are joined by a disulfide. Residues 660–671 (AELSPLLLSTTQ) form a PKR/eIF2-alpha phosphorylation homology domain (PePHD) region. The helical transmembrane segment at 726–746 (LADARICACLWMMLLISQVEA) threads the bilayer. At 747–757 (ALENLIVLNAA) the chain is on the lumenal side. The chain crosses the membrane as a helical span at residues 758–778 (SLAGTHGIVPFFIFFCAAWYL). Topologically, residues 779-781 (KGK) are cytoplasmic. The helical transmembrane segment at 782-803 (WAPGLVYSVYGMWPLLLLLLAL) threads the bilayer. The Lumenal portion of the chain corresponds to 804–813 (PQRAYALDQE). A helical membrane pass occupies residues 814 to 834 (LAASCGAVVFISLAVLTLSPY). Over 835–838 (YKQY) the chain is Cytoplasmic. Residues 839 to 859 (MARGIWWLQYMLTRAEALLHV) form a helical membrane-spanning segment. The Lumenal portion of the chain corresponds to 860–881 (WVPSLNARGGRDGAILLMCVLH). A helical transmembrane segment spans residues 882 to 902 (PHLLFDITKIMLAILGPLWIL). Residues 903-1026 (QASLLRVPYF…ALTDKGWRLL (124 aa)) enclose the Peptidase C18 domain. The Cytoplasmic segment spans residues 903-1657 (QASLLRVPYF…CMSADLEVVT (755 aa)). The protease NS2-3 stretch occupies residues 904-1206 (ASLLRVPYFV…PVESLETTMR (303 aa)). C922 is lipidated: S-palmitoyl cysteine; by host. The tract at residues 929–949 (AGGHYVQMALLKLGALTGTYI) is interaction with host SCPS1. Catalysis depends on for protease NS2 activity; shared with dimeric partner residues H952, E972, and C993. Residues 1027-1208 (APITAYAQQT…ESLETTMRSP (182 aa)) enclose the Peptidase S29 domain. Active-site charge relay system; for serine protease NS3 activity residues include H1083 and D1107. The Zn(2+) site is built by C1123 and C1125. Residue S1165 is the Charge relay system; for serine protease NS3 activity of the active site. Zn(2+) contacts are provided by C1171 and H1175. The Helicase ATP-binding domain maps to 1217–1369 (PTVPQSYQVA…SNIEEVALSA (153 aa)). 1230 to 1237 (APTGSGKS) lines the ATP pocket. Positions 1237 and 1317 each coordinate Mg(2+). The DECH box motif lies at 1316–1319 (DECH). The RNA-binding stretch occupies residues 1486–1497 (QRRGRTGRGKHG). Residues 1658–1678 (STWVLVGGVLAALAAYCLSTG) form a helical membrane-spanning segment. The segment at 1679–1690 (SVVIVGRIILGG) is NS3-binding. Topologically, residues 1679–1805 (SVVIVGRIIL…AVTSPLTTQQ (127 aa)) are cytoplasmic. The chain crosses the membrane as a helical span at residues 1806 to 1824 (TLFFNILGGWVAAQLASPA). The Lumenal portion of the chain corresponds to 1825 to 1828 (AATA). A helical transmembrane segment spans residues 1829–1849 (FVGAGITGAVVGSVGLGKVLV). Position 1850 (D1850) is a topological domain, cytoplasmic. Residues 1851–1871 (IIAGYGAGVAGALVAFKIMSG) form a helical membrane-spanning segment. Over 1872–1881 (ETPTTEDLVN) the chain is Lumenal. Residues 1882 to 1902 (LLPAILSPGALVVGVVCAAIL) form a helical membrane-spanning segment. The Cytoplasmic portion of the chain corresponds to 1903-1972 (RRHVGPGEGA…WISSDCIAPC (70 aa)). Residues C1968 and C1972 are each lipidated (S-palmitoyl cysteine; by host). An intramembrane segment occupies 1973–2002 (ASSWLKDVWDWICEVLSDFKNWLKAKLVPQ). Topologically, residues 2003–2990 (LPGIPFVSCQ…YHSVSHARPR (988 aa)) are cytoplasmic. Zn(2+)-binding residues include C2011, C2029, C2031, and C2052. The segment at 2120 to 2208 (EFFTEVDGVR…ASSSASQLSA (89 aa)) is FKBP8-binding. The tract at residues 2120–2332 (EFFTEVDGVR…PVPPPRRKRT (213 aa)) is transcriptional activation. The interval 2135-2139 (PPCKP) is interaction with non-structural protein 4A. A disordered region spans residues 2187–2219 (ARRLKRGSPPSLASSSASQLSAPSLKATCTTHH). The tract at residues 2189-2441 (RLKRGSPPSL…TPCASEEAKL (253 aa)) is interaction with host SKP2. The residue at position 2194 (S2194) is a Phosphoserine; by host; in p56. Residues 2194-2211 (SPPSLASSSASQLSAPSL) are compositionally biased toward low complexity. 5 positions are modified to phosphoserine; by host; in p58: S2197, S2201, S2204, S2207, and S2210. Residues 2210–2249 (SLKATCTTHHDSPDADLIEANLLWRQEMGGNITRVESENK) are ISDR. The segment at 2210–2275 (SLKATCTTHH…REISIPAEIL (66 aa)) is interaction with EIF2AK2/PKR. Positions 2249-2306 (KIVVLDSFDPLVAEEDDREISIPAEILRKFKQFPPAMPIWARPDYNPPLVEPWKRPDY) are NS4B-binding. The SH3-binding motif lies at 2322–2325 (TPVP). The Nuclear localization signal signature appears at 2326–2334 (PPRRKRTVV). Residue K2350 forms a Glycyl lysine isopeptide (Lys-Gly) (interchain with G-Cter in ubiquitin) linkage. Positions 2352 to 2369 (FGSSTTSGVTSGEATESS) are enriched in low complexity. Residues 2352–2409 (FGSSTTSGVTSGEATESSPAPSCGGELDSEAESYSSMPPLEGEPGDPDLSDGSWSTVS) are disordered. Residues 2354–2377 (SSTTSGVTSGEATESSPAPSCGGE) form a V3 region. S2449 and S2462 each carry phosphoserine; by host. The RdRp catalytic domain occupies 2634–2752 (PMGFSYDTRC…ICESAGVQED (119 aa)). D2640, D2738, and D2739 together coordinate Mg(2+). The chain crosses the membrane as a helical span at residues 2991 to 3011 (LFLWCLLLLSVGVGIYLLPNR).

Belongs to the hepacivirus polyprotein family. Homooligomer. Interacts with E1 (via C-terminus). Interacts with the non-structural protein 5A. Interacts (via N-terminus) with host STAT1 (via SH2 domain); this interaction results in decreased STAT1 phosphorylation and ubiquitin-mediated proteasome-dependent STAT1 degradation, leading to decreased IFN-stimulated gene transcription. Interacts with host STAT3; this interaction constitutively activates STAT3. Interacts with host LTBR receptor. Interacts with host TNFRSF1A receptor and possibly induces apoptosis. Interacts with host HNRPK. Interacts with host YWHAE. Interacts with host UBE3A/E6AP. Interacts with host DDX3X. Interacts with host APOA2. Interacts with host RXRA protein. Interacts with host SP110 isoform 3/Sp110b; this interaction sequesters the transcriptional corepressor SP110 away from the nucleus. Interacts with host CREB3 nuclear transcription protein; this interaction triggers cell transformation. Interacts with host ACY3. Interacts with host C1QR1. Interacts with host RBM24; this interaction, which enhances the interaction of the mature core protein with 5'-UTR, may inhibit viral translation and favor replication. Interacts with host EIF2AK2/PKR; this interaction induces the autophosphorylation of EIF2AK2. Part of the viral assembly initiation complex composed of NS2, E1, E2, NS3, NS4A, NS5A and the mature core protein. In terms of assembly, forms a heterodimer with envelope glycoprotein E2. Interacts with mature core protein. Interacts with protease NS2. The heterodimer E1/E2 interacts with host CLDN1; this interaction plays a role in viral entry into host cell. Interacts with host SPSB2 (via C-terminus). Part of the viral assembly initiation complex composed of NS2, E1, E2, NS3, NS4A, NS5A and the mature core protein. Interacts with host NEURL3; this interaction prevents E1 binding to glycoprotein E2. As to quaternary structure, forms a heterodimer with envelope glycoprotein E1. Interacts with host CD81 and SCARB1 receptors; these interactions play a role in viral entry into host cell. Interacts with host EIF2AK2/PKR; this interaction inhibits EIF2AK2 and probably allows the virus to evade the innate immune response. Interacts with host CD209/DC-SIGN and CLEC4M/DC-SIGNR. Interact with host SPCS1; this interaction is essential for viral particle assembly. Interacts with protease NS2. The heterodimer E1/E2 interacts with host CLDN1; this interaction plays a role in viral entry into host cell. Part of the viral assembly initiation complex composed of NS2, E1, E2, NS3, NS4A, NS5A and the mature core protein. Interacts with host SLC3A2/4F2hc; the interaction may facilitate viral entry into host cell. Interacts with human PLSCR1. Homohexamer. Homoheptamer. Interacts with protease NS2. In terms of assembly, homodimer. Interacts with host SPCS1; this interaction is essential for viral particle assembly. Interacts with envelope glycoprotein E1. Interacts with envelope glycoprotein E2. Interacts with viroporin p7. Interacts with serine protease/helicase NS3. Part of the replication complex composed of NS2, NS3, NS4A, NS4B, NS5A and the RNA-directed RNA polymerase embedded in an ER-derived membranous web. Part of the viral assembly initiation complex composed of NS2, E1, E2, NS3, NS4A, NS5A and the mature core protein. As to quaternary structure, interacts with protease NS2. Interacts with non-structural protein 4A; this interaction stabilizes the folding of NS3 serine protease. NS3-NS4A interaction is essential for NS3 activation and allows membrane anchorage of the latter. NS3/NS4A complex also prevents phosphorylation of host IRF3, thus preventing the establishment of dsRNA induced antiviral state. Interacts with host MAVS; this interaction leads to the cleavage and inhibition of host MAVS. Interacts with host TICAM1; this interaction leads to the cleavage and inhibition of host TICAM1. Interacts with host TANK-binding kinase/TBK1; this interaction results in the inhibition of the association between TBK1 and IRF3, which leads to the inhibition of IRF3 activation. Interacts with host RBM24. Part of the replication complex composed of NS2, NS3, NS4A, NS4B, NS5A and the RNA-directed RNA polymerase embedded in an ER-derived membranous web. Part of the viral assembly initiation complex composed of NS2, E1, E2, NS3, NS4A, NS5A and the mature core protein. Interacts with NS3 serine protease; this interaction stabilizes the folding of NS3 serine protease. NS3-NS4A interaction is essential for NS3 activation and allows membrane anchorage of the latter. Interacts with non-structural protein 5A (via N-terminus). Part of the replication complex composed of NS2, NS3, NS4A, NS4B, NS5A and the RNA-directed RNA polymerase embedded in an ER-derived membranous web. Part of the viral assembly initiation complex composed of NS2, E1, E2, NS3, NS4A, NS5A and the mature core protein. In terms of assembly, homomultimer. Interacts with non-structural protein NS5A. Interacts with host PLA2G4C; this interaction likely initiates the recruitment of replication complexes to lipid droplets. Interacts with host STING; this interaction disrupts the interaction between STING and TBK1 thereby suppressing the interferon signaling. Part of the replication complex composed of NS2, NS3, NS4A, NS4B, NS5A and the RNA-directed RNA polymerase embedded in an ER-derived membranous web. As to quaternary structure, monomer. Homodimer; dimerization is required for RNA-binding. Interacts with the mature core protein. Interacts (via N-terminus) with non-structural protein 4A. Interacts with non-structural protein 4B. Interacts (via region D2) with RNA-directed RNA polymerase. Part of the viral assembly initiation complex composed of NS2, E1, E2, NS3, NS4A, NS5A and the mature core protein. Part of the replication complex composed of NS2, NS3, NS4A, NS4B, NS5A and the RNA-directed RNA polymerase embedded in an ER-derived membranous web. Interacts with host GRB2. Interacts with host BIN1. Interacts with host PIK3R1. Interacts with host SRCAP. Interacts with host FKBP8. Interacts (via C-terminus) with host VAPB (via MSP domain). Interacts with host EIF2AK2/PKR; this interaction leads to disruption of EIF2AK2 dimerization by NS5A and probably allows the virus to evade the innate immune response. Interacts (via N-terminus) with host PACSIN2 (via N-terminus); this interaction attenuates protein kinase C alpha-mediated phosphorylation of PACSIN2 by disrupting the interaction between PACSIN2 and PRKCA. Interacts (via N-terminus) with host SRC kinase (via SH2 domain). Interacts with most Src-family kinases. Interacts with host IFI27 and SKP2; promotes the ubiquitin-mediated proteasomal degradation of NS5A. Interacts with host GPS2. Interacts with host TNFRSF21; this interaction allows the modulation by the virus of JNK, p38 MAPK, STAT3, and Akt signaling pathways in a DR6-dependent manner. Interacts (via N-terminus) with host CIDEB (via N-terminus); this interaction seems to regulate the association of HCV particles with APOE. Interacts with host CHKA/Choline Kinase-alpha; CHKA bridges host PI4KA and NS5A and potentiates NS5A-stimulated PI4KA activity, which then facilitates the targeting of the ternary complex to the ER for viral replication. Interacts with host SPSB2 (via C-terminus); this interaction targets NS5A for ubiquitination and degradation. Interacts with host RAB18; this interaction may promote the association of NS5A and other replicase components with lipid droplets. Interacts (via region D2) with host PPIA/CYPA; the interaction stimulates RNA-binding ability of NS5A and is dependent on the peptidyl-prolyl cis-trans isomerase activity of PPIA/CYPA. Interacts with host TRIM14; this interaction induces the degradation of NS5A. Homooligomer. Interacts with non-structural protein 5A. Interacts with host VAPB. Interacts with host PRK2/PKN2. Interacts with host HNRNPA1 and SEPT6; these interactions facilitate viral replication. Part of the replication complex composed of NS2, NS3, NS4A, NS4B, NS5A and the RNA-directed RNA polymerase. The cofactor is Zn(2+). Mg(2+) is required as a cofactor. In terms of processing, specific enzymatic cleavages in vivo yield mature proteins. The structural proteins, core, E1, E2 and p7 are produced by proteolytic processing by host signal peptidases. The core protein precursor is synthesized as a 23 kDa, which is retained in the ER membrane through the hydrophobic signal peptide. Cleavage by the signal peptidase releases the 21 kDa mature core protein. The cleavage of the core protein precursor occurs between aminoacids 176 and 188 but the exact cleavage site is not known. Some degraded forms of the core protein appear as well during the course of infection. The other proteins (p7, NS2, NS3, NS4A, NS4B, NS5A and NS5B) are cleaved by the viral proteases. Autoprocessing between NS2 and NS3 is mediated by the NS2 cysteine protease catalytic domain and regulated by the NS3 N-terminal domain. Phosphorylated by host PKC and PKA. Post-translationally, ubiquitinated; mediated by UBE3A and leading to core protein subsequent proteasomal degradation. In terms of processing, highly N-glycosylated. Palmitoylation is required for NS2/3 autoprocessing and E2 recruitment to membranes. Post-translationally, palmitoylated. This modification may play a role in its polymerization or in protein-protein interactions. In terms of processing, phosphorylated on serines in a basal form termed p56. p58 is a hyperphosphorylated form of p56. p56 and p58 coexist in the cell in roughly equivalent amounts. Hyperphosphorylation is dependent on the presence of NS4A. Host CSNK1A1/CKI-alpha or RPS6KB1 kinases may be responsible for NS5A phosphorylation. Tyrosine phosphorylation is essential for the interaction with host SRC. Post-translationally, the N-terminus is phosphorylated by host PRK2/PKN2.

Its subcellular location is the host endoplasmic reticulum membrane. It is found in the host mitochondrion membrane. The protein resides in the virion. The protein localises to the host cytoplasm. It localises to the host nucleus. Its subcellular location is the host lipid droplet. It is found in the virion membrane. The protein resides in the host mitochondrion. The protein localises to the host cell membrane. It localises to the host perinuclear region. It catalyses the reaction Hydrolysis of four peptide bonds in the viral precursor polyprotein, commonly with Asp or Glu in the P6 position, Cys or Thr in P1 and Ser or Ala in P1'.. It carries out the reaction a ribonucleoside 5'-triphosphate + H2O = a ribonucleoside 5'-diphosphate + phosphate + H(+). The catalysed reaction is ATP + H2O = ADP + phosphate + H(+). The enzyme catalyses RNA(n) + a ribonucleoside 5'-triphosphate = RNA(n+1) + diphosphate. Inhibited by the antiviral drug hexamethylene amiloride. Inhibition by amantadine appears to be genotype-dependent. Also inhibited by long-alkyl-chain iminosugar derivatives. Its activity is regulated as follows. Activity is up-regulated by PRK2/PKN2-mediated phosphorylation. Its function is as follows. Packages viral RNA to form a viral nucleocapsid, and promotes virion budding. Participates in the viral particle production as a result of its interaction with the non-structural protein 5A. Binds RNA and may function as a RNA chaperone to induce the RNA structural rearrangements taking place during virus replication. Modulates viral translation initiation by interacting with viral IRES and 40S ribosomal subunit. Affects various cell signaling pathways, host immunity and lipid metabolism. Prevents the establishment of cellular antiviral state by blocking the interferon-alpha/beta (IFN-alpha/beta) and IFN-gamma signaling pathways and by blocking the formation of phosphorylated STAT1 and promoting ubiquitin-mediated proteasome-dependent degradation of STAT1. Activates STAT3 leading to cellular transformation. Regulates the activity of cellular genes, including c-myc and c-fos. May repress the promoter of p53, and sequester CREB3 and SP110 isoform 3/Sp110b in the cytoplasm. Represses cell cycle negative regulating factor CDKN1A, thereby interrupting an important check point of normal cell cycle regulation. Targets transcription factors involved in the regulation of inflammatory responses and in the immune response: suppresses TNF-induced NF-kappa-B activation, and activates AP-1. Binds to dendritic cells (DCs) via C1QR1, resulting in down-regulation of T-lymphocytes proliferation. Alters lipid metabolism by interacting with hepatocellular proteins involved in lipid accumulation and storage. Induces up-regulation of FAS promoter activity, and thereby contributes to the increased triglyceride accumulation in hepatocytes (steatosis). Functionally, forms a heterodimer with envelope glycoprotein E2, which mediates virus attachment to the host cell, virion internalization through clathrin-dependent endocytosis and fusion with host membrane. Fusion with the host cell is most likely mediated by both E1 and E2, through conformational rearrangements of the heterodimer required for fusion rather than a classical class II fusion mechanism. E1/E2 heterodimer binds host apolipoproteins such as APOB and ApoE thereby forming a lipo-viro-particle (LVP). APOE associated to the LVP allows the initial virus attachment to cell surface receptors such as the heparan sulfate proteoglycans (HSPGs), syndecan-1 (SDC1), syndecan-1 (SDC2), the low-density lipoprotein receptor (LDLR) and scavenger receptor class B type I (SCARB1). The cholesterol transfer activity of SCARB1 allows E2 exposure and binding of E2 to SCARB1 and the tetraspanin CD81. E1/E2 heterodimer binding on CD81 activates the epithelial growth factor receptor (EGFR) signaling pathway. Diffusion of the complex E1-E2-EGFR-SCARB1-CD81 to the cell lateral membrane allows further interaction with Claudin 1 (CLDN1) and occludin (OCLN) to finally trigger HCV entry. In terms of biological role, forms a heterodimer with envelope glycoprotein E1, which mediates virus attachment to the host cell, virion internalization through clathrin-dependent endocytosis and fusion with host membrane. Fusion with the host cell is most likely mediated by both E1 and E2, through conformational rearrangements of the heterodimer required for fusion rather than a classical class II fusion mechanism. The interaction between envelope glycoprotein E2 and host apolipoprotein E/APOE allows the proper assembly, maturation and infectivity of the viral particles. This interaction is probably promoted via the up-regulation of cellular autophagy by the virus. E1/E2 heterodimer binds host apolipoproteins such as APOB and APOE thereby forming a lipo-viro-particle (LVP). APOE associated to the LVP allows the initial virus attachment to cell surface receptors such as the heparan sulfate proteoglycans (HSPGs), syndecan-1 (SDC1), syndecan-1 (SDC2), the low-density lipoprotein receptor (LDLR) and scavenger receptor class B type I (SCARB1). The cholesterol transfer activity of SCARB1 allows E2 exposure and binding of E2 to SCARB1 and the tetraspanin CD81. E1/E2 heterodimer binding on CD81 activates the epithelial growth factor receptor (EGFR) signaling pathway. Diffusion of the complex E1-E2-EGFR-SCARB1-CD81 to the cell lateral membrane allows further interaction with Claudin 1 (CLDN1) and occludin (OCLN) to finally trigger HCV entry. Inhibits host EIF2AK2/PKR activation, preventing the establishment of an antiviral state. Viral ligand for CD209/DC-SIGN and CLEC4M/DC-SIGNR, which are respectively found on dendritic cells (DCs), and on liver sinusoidal endothelial cells and macrophage-like cells of lymph node sinuses. These interactions allow the capture of circulating HCV particles by these cells and subsequent facilitated transmission to permissive cells such as hepatocytes and lymphocyte subpopulations. The interaction between E2 and host amino acid transporter complex formed by SLC3A2 and SLC7A5/LAT1 may facilitate viral entry into host cell. Ion channel protein that acts as a viroporin and plays an essential role in the assembly, envelopment and secretion of viral particles. Regulates the host cell secretory pathway, which induces the intracellular retention of viral glycoproteins and favors assembly of viral particles. Creates a pore in acidic organelles and releases Ca(2+) and H(+) in the cytoplasm of infected cells, leading to a productive viral infection. High levels of cytoplasmic Ca(2+) may trigger membrane trafficking and transport of viral ER-associated proteins to viroplasms, sites of viral genome replication. This ionic imbalance induces the assembly of the inflammasome complex, which triggers the maturation of pro-IL-1beta into IL-1beta through the action of caspase-1. Targets also host mitochondria and induces mitochondrial depolarization. In addition of its role as a viroporin, acts as a lipid raft adhesion factor. Its function is as follows. Cysteine protease required for the proteolytic auto-cleavage between the non-structural proteins NS2 and NS3. The N-terminus of NS3 is required for the function of NS2 protease (active region NS2-3). Promotes the initiation of viral particle assembly by mediating the interaction between structural and non-structural proteins. Functionally, displays three enzymatic activities: serine protease with a chymotrypsin-like fold, NTPase and RNA helicase. NS3 serine protease, in association with NS4A, is responsible for the cleavages of NS3-NS4A, NS4A-NS4B, NS4B-NS5A and NS5A-NS5B. The NS3/NS4A complex prevents phosphorylation of host IRF3, thus preventing the establishment of dsRNA induced antiviral state. The NS3/NS4A complex induces host amino acid transporter component SLC3A2, thus contributing to HCV propagation. NS3 RNA helicase binds to RNA and unwinds both dsDNA and dsRNA in the 3' to 5' direction, and likely resolves RNA complicated stable secondary structures in the template strand. Binds a single ATP and catalyzes the unzipping of a single base pair of dsRNA. Inhibits host antiviral proteins TBK1 and IRF3 thereby preventing the establishment of an antiviral state. Cleaves host MAVS/CARDIF thereby preventing the establishment of an antiviral state. Cleaves host TICAM1/TRIF, thereby disrupting TLR3 signaling and preventing the establishment of an antiviral state. In terms of biological role, induces a specific membrane alteration that serves as a scaffold for the virus replication complex. This membrane alteration gives rise to the so-called ER-derived membranous web that contains the replication complex. NS4B self-interaction contributes to its function in membranous web formation. Promotes host TRIF protein degradation in a CASP8-dependent manner thereby inhibiting host TLR3-mediated interferon signaling. Disrupts the interaction between STING and TBK1 contributing to the inhibition of interferon signaling. Phosphorylated protein that is indispensable for viral replication and assembly. Both hypo- and hyperphosphorylated states are required for the viral life cycle. The hyperphosphorylated form of NS5A is an inhibitor of viral replication. Involved in RNA-binding and especially in binding to the viral genome. Zinc is essential for RNA-binding. Participates in the viral particle production as a result of its interaction with the mature viral core protein. Its interaction with host VAPB may target the viral replication complex to vesicles. Down-regulates viral IRES translation initiation. Mediates interferon resistance, presumably by interacting with and inhibiting host EIF2AK2/PKR. Prevents BIN1-induced apoptosis. Acts as a transcriptional activator of some host genes important for viral replication when localized in the nucleus. Via the interaction with host PACSIN2, modulates lipid droplet formation in order to promote virion assembly. Modulates TNFRSF21/DR6 signaling pathway for viral propagation. Its function is as follows. RNA-dependent RNA polymerase that performs primer-template recognition and RNA synthesis during viral replication. Initiates RNA transcription/replication at a flavin adenine dinucleotide (FAD), resulting in a 5'- FAD cap on viral RNAs. In this way, recognition of viral 5' RNA by host pattern recognition receptors can be bypassed, thereby evading activation of antiviral pathways. The protein is Genome polyprotein of Hepatitis C virus genotype 1c (isolate India) (HCV).